The sequence spans 248 residues: 5'-nucleotidase SurE (248 aa).

4 residues coordinate a divalent metal cation: Asp-8, Asp-9, Ser-39, and Asn-91.

The protein belongs to the SurE nucleotidase family. Requires a divalent metal cation as cofactor.

It localises to the cytoplasm. The catalysed reaction is a ribonucleoside 5'-phosphate + H2O = a ribonucleoside + phosphate. Functionally, nucleotidase that shows phosphatase activity on nucleoside 5'-monophosphates. This Neisseria meningitidis serogroup B (strain ATCC BAA-335 / MC58) protein is 5'-nucleotidase SurE.